The chain runs to 145 residues: Large ribosomal subunit protein uL11 (145 aa).

Belongs to the universal ribosomal protein uL11 family. As to quaternary structure, part of the ribosomal stalk of the 50S ribosomal subunit. Interacts with L10 and the large rRNA to form the base of the stalk. L10 forms an elongated spine to which L12 dimers bind in a sequential fashion forming a multimeric L10(L12)X complex. Post-translationally, one or more lysine residues are methylated.

In terms of biological role, forms part of the ribosomal stalk which helps the ribosome interact with GTP-bound translation factors. This is Large ribosomal subunit protein uL11 from Flavobacterium johnsoniae (strain ATCC 17061 / DSM 2064 / JCM 8514 / BCRC 14874 / CCUG 350202 / NBRC 14942 / NCIMB 11054 / UW101) (Cytophaga johnsonae).